The chain runs to 605 residues: Zinc metalloproteinase nas-34 (605 aa).

The signal sequence occupies residues Met-1–Ala-19. Residues Lys-20 to Arg-124 constitute a propeptide that is removed on maturation. In terms of domain architecture, Peptidase M12A spans Arg-124–Asn-322. 2 disulfides stabilise this stretch: Cys-165–Cys-321 and Cys-191–Cys-211. Residue His-219 coordinates Zn(2+). Glu-220 is an active-site residue. 2 residues coordinate Zn(2+): His-223 and His-229. The 41-residue stretch at Asn-317 to Asp-357 folds into the EGF-like domain. Asn-322 is a glycosylation site (N-linked (GlcNAc...) asparagine). 4 disulfides stabilise this stretch: Cys-325/Cys-345, Cys-347/Cys-356, Cys-366/Cys-388, and Cys-415/Cys-436. A CUB domain is found at Cys-366–Asp-469. The tract at residues Thr-479–Thr-526 is disordered. Positions Thr-525–Thr-566 constitute a TSP type-1 domain. 3 disulfide bridges follow: Cys-531/Cys-551, Cys-537/Cys-560, and Cys-541/Cys-565.

Requires Zn(2+) as cofactor. Expressed in hypodermal cells. First expressed in the dorsal and lateral surface area of the middle and posterior region of embryos. At later stages, it localizes to lateral surface regions, probably corresponding to hypodermal seam cells. In L1 larvae, it is expressed in seam cells and in a few cells anterior to the nerve ring.

It is found in the secreted. Functionally, metalloprotease. Required for normal hatching and migration of neuroblasts. May act by degrading eggshell proteins at hatching. In Caenorhabditis elegans, this protein is Zinc metalloproteinase nas-34 (hch-1).